Consider the following 597-residue polypeptide: 2-succinyl-5-enolpyruvyl-6-hydroxy-3-cyclohexene-1-carboxylate synthase (597 aa).

The protein belongs to the TPP enzyme family. MenD subfamily. As to quaternary structure, homodimer. Requires Mg(2+) as cofactor. The cofactor is Mn(2+). Thiamine diphosphate serves as cofactor.

It catalyses the reaction isochorismate + 2-oxoglutarate + H(+) = 5-enolpyruvoyl-6-hydroxy-2-succinyl-cyclohex-3-ene-1-carboxylate + CO2. It functions in the pathway quinol/quinone metabolism; 1,4-dihydroxy-2-naphthoate biosynthesis; 1,4-dihydroxy-2-naphthoate from chorismate: step 2/7. It participates in cofactor biosynthesis; phylloquinone biosynthesis. Catalyzes the thiamine diphosphate-dependent decarboxylation of 2-oxoglutarate and the subsequent addition of the resulting succinic semialdehyde-thiamine pyrophosphate anion to isochorismate to yield 2-succinyl-5-enolpyruvyl-6-hydroxy-3-cyclohexene-1-carboxylate (SEPHCHC). This chain is 2-succinyl-5-enolpyruvyl-6-hydroxy-3-cyclohexene-1-carboxylate synthase, found in Synechococcus sp. (strain JA-3-3Ab) (Cyanobacteria bacterium Yellowstone A-Prime).